The primary structure comprises 883 residues: Putative pentatricopeptide repeat-containing protein At1g13800 (883 aa).

PPR repeat units follow at residues 145–180, 181–215, 216–251, 253–285, 290–324, 325–359, 360–394, 395–429, 430–464, 465–499, 500–534, 537–561, 563–598, 599–633, 634–668, 697–731, 760–794, 795–829, and 830–864; these read LIRV…GRAP, DIKA…GLDA, DAHT…TRNP, VFYL…NILV, LGIA…GIDP, DVYV…RKRI, NCVI…NISL, DRVC…GIAP, DVIN…GKTP, DIVI…GVKP, TYVT…SREN, SMVK…LEFP, PKSV…GVEP, EKSM…KIVP, DLFT…DVKP, DVVY…EIVP, DVFY…GVDP, DAAP…GVKP, and DVVP…GIKP.

Belongs to the PPR family. P subfamily.

The sequence is that of Putative pentatricopeptide repeat-containing protein At1g13800 from Arabidopsis thaliana (Mouse-ear cress).